Consider the following 2550-residue polypeptide: Highly reducing polyketide synthase otaA (2550 aa).

Positions 9 to 431 (SEPLAIIGLA…GTNAHAVVED (423 aa)) constitute a Ketosynthase family 3 (KS3) domain. Residues C182, H317, and H355 each act as for beta-ketoacyl synthase activity in the active site. Positions 572–894 (FVFTGQGANW…KRYETNGSTI (323 aa)) are malonyl-CoA:ACP transacylase (MAT) domain. Residues 959–1094 (HELLGVPVED…GSVRAETGPP (136 aa)) form an N-terminal hotdog fold region. The segment at 959 to 1252 (HELLGVPVED…DLVQLPANND (294 aa)) is dehydratase (DH) domain. A PKS/mFAS DH domain is found at 959–1253 (HELLGVPVED…LVQLPANNDD (295 aa)). Residues 1107 to 1253 (AEPVDIAQMY…LVQLPANNDD (147 aa)) form a C-terminal hotdog fold region. 2 residues coordinate S-adenosyl-L-methionine: I1420 and E1442. Residues 1433-1612 (HAQTGIKILE…GLRPRLIIND (180 aa)) form a methyltransferase (CMeT) domain region. The segment at 1859–1919 (PDEVKIRIHA…DQVMALRTGP (61 aa)) is enoyl reductase (ER) (ER) domain. A ketoreductase (KR) domain region spans residues 2166–2345 (ASYLLIGGFG…PATSVSLGSV (180 aa)). Positions 2454–2531 (AAVEVVTRAI…QLAQQAADAS (78 aa)) constitute a Carrier domain. S2491 carries the post-translational modification O-(pantetheine 4'-phosphoryl)serine.

Pantetheine 4'-phosphate serves as cofactor.

It carries out the reaction 4 malonyl-CoA + acetyl-CoA + 5 NADPH + 9 H(+) = 7-methylmellein + 3 CO2 + 5 NADP(+) + 5 CoA + 4 H2O. The protein operates within mycotoxin biosynthesis. Functionally, highly reducing polyketide synthase; part of the gene cluster that mediates the biosynthesis of ochratoxin A (OTA), a mycotoxin composed of a chlorinated type I polyketide dihydroisocoumarin moiety linked to L-phenylalanine, and demonstrated to have nephrotoxic, immunotoxic, genotoxic, neurotoxic, and teratogenic properties. OtaA catalyzes the condensation of one acetate and 4 malonate units to form the isocoumarin group. The pathway begins with the highly reducing polyketide synthase otaA that catalyzes the formation of the isocoumarin group during the initial stages of biosynthesis, starting from one acetate and 4 malonate units, to originate the characteristic pentaketide skeleton 7-methylmellein (7-MM) of the OTA molecule. The newly identified cyclase otaY might be involved in the polyketide cyclization reaction during the initial steps of the OTA biosynthesis. 7-MM is then oxidized into 7-carboxymellein (also called ochratoxin beta) by the cytochrome P450 monooxygenase otaC. The NRPS encoded by the otaB gene is involved in the linking of phenylalanine to the dihydroisocoumarin ring. The reaction catalyzed by NRPS results in the production of ochratoxin B (OTB), which is the non-chlorinated analog of OTA and which subsequently serves as the substrate of the halogenase otaD for chlorination activity to form the final molecular structure of OTA, containing a chlorine atom in the C-5 position of the molecule. The polypeptide is Highly reducing polyketide synthase otaA (Aspergillus niger (strain ATCC MYA-4892 / CBS 513.88 / FGSC A1513)).